A 139-amino-acid chain; its full sequence is Large ribosomal subunit protein bL17 (139 aa).

Positions glutamate 120 to alanine 139 are disordered.

It belongs to the bacterial ribosomal protein bL17 family. In terms of assembly, part of the 50S ribosomal subunit. Contacts protein L32.

In Parvibaculum lavamentivorans (strain DS-1 / DSM 13023 / NCIMB 13966), this protein is Large ribosomal subunit protein bL17.